The primary structure comprises 557 residues: NADP-dependent malic enzyme (557 aa).

Tyr91 functions as the Proton donor in the catalytic mechanism. Arg144 lines the NADP(+) pocket. Catalysis depends on Lys162, which acts as the Proton acceptor. A divalent metal cation-binding residues include Glu234, Asp235, and Asp258. Residues Asp258, 290–307 (GAGE…MAME), and Asn397 each bind NADP(+).

The protein belongs to the malic enzymes family. In terms of assembly, homotetramer. It depends on Mg(2+) as a cofactor. Mn(2+) serves as cofactor.

The protein localises to the cytoplasm. It catalyses the reaction (S)-malate + NADP(+) = pyruvate + CO2 + NADPH. The enzyme catalyses oxaloacetate + H(+) = pyruvate + CO2. This is NADP-dependent malic enzyme (ME1) from Anas platyrhynchos (Mallard).